A 177-amino-acid chain; its full sequence is tRNA (cytidine(56)-2'-O)-methyltransferase (177 aa).

S-adenosyl-L-methionine-binding positions include Leu-84 and 109–113; that span reads GAEKV.

The protein belongs to the aTrm56 family. In terms of assembly, homodimer.

Its subcellular location is the cytoplasm. The catalysed reaction is cytidine(56) in tRNA + S-adenosyl-L-methionine = 2'-O-methylcytidine(56) in tRNA + S-adenosyl-L-homocysteine + H(+). Functionally, specifically catalyzes the AdoMet-dependent 2'-O-ribose methylation of cytidine at position 56 in tRNAs. The sequence is that of tRNA (cytidine(56)-2'-O)-methyltransferase from Methanosarcina acetivorans (strain ATCC 35395 / DSM 2834 / JCM 12185 / C2A).